Consider the following 1488-residue polypeptide: Calmodulin binding protein PICBP (1488 aa).

Disordered regions lie at residues 1-31, 63-112, 280-329, and 378-414; these read MSNP…RKMW, TAES…SRIS, GPLG…GRSS, and HDHD…EEDG. The span at 18 to 31 shows a compositional bias: basic residues; sequence SSRRVHKRRERKMW. Basic and acidic residues predominate over residues 76–86; that stretch reads DDSRTYSKSSD. Residues 98-107 are compositionally biased toward basic residues; the sequence is SVKRRAKSKS. Over residues 297–312 the composition is skewed to acidic residues; the sequence is DNVDGDSDEEVFEEEV. Calmodulin-binding stretches follow at residues 493-592 and 831-938; these read TFHM…SLIP and NSLK…DIVL. Disordered regions lie at residues 816–844 and 941–971; these read IPDS…GETK and HDTP…EGCE. Composition is skewed to basic and acidic residues over residues 833–844 and 954–971; these read LKEEKEHQGETK and RNND…EGCE. The interval 1135–1229 is calmodulin-binding; the sequence is EKRVKGWNNV…SLLAQAFDTI (95 aa). Disordered stretches follow at residues 1232-1252 and 1316-1340; these read QDMG…ISRQ and EKNQ…DTSV. Low complexity predominate over residues 1235 to 1252; that stretch reads GSGSTPGSAASSRNISRQ. Residues 1316–1328 show a composition bias toward basic and acidic residues; sequence EKNQTLPEETRKE. The calmodulin-binding stretch occupies residues 1379–1483; that stretch reads RQKSETLQVS…QLLVQAFESL (105 aa).

Binds calmodulin in a calcium-dependent manner in vitro. May play a role in general plant defense including R gene-mediated responses. This is Calmodulin binding protein PICBP from Arabidopsis thaliana (Mouse-ear cress).